Consider the following 796-residue polypeptide: Probable phosphoketolase (796 aa).

It belongs to the XFP family. Thiamine diphosphate is required as a cofactor.

The polypeptide is Probable phosphoketolase (Synechococcus elongatus (strain ATCC 33912 / PCC 7942 / FACHB-805) (Anacystis nidulans R2)).